A 282-amino-acid polypeptide reads, in one-letter code: DNA processing protein DprA (282 aa).

Belongs to the DprA/Smf family. Homodimer; forms tail-to-tail dimers, forms nucleoprotein complex (NPC) which requires at least 30 nucleotides (nt) of ssDNA becoming optimal with 50 nt. Interacts with RecA, forms mixed DprA-RecA-ssDNA filaments. Interacts with ComFA and ComFC.

The protein localises to the cytoplasm. In terms of biological role, protein that helps load RecA onto ssDNA during transformation. Required for DNA transformation. Not required for DNA uptake but for a later stage of transformation. Thought to interact at the cell pole with newly imported transforming ssDNA which it binds cooperatively, protecting linear and circular ssDNA from nuclease action. Forms bridges between DNA segments. Favors the loading of RecA onto ssDNA and formation of RecA-DNA filaments, triggering RecA-catalysis of ATP-driven homologous DNA pairing. The protein is DNA processing protein DprA of Streptococcus pneumoniae (strain ATCC BAA-255 / R6).